The chain runs to 592 residues: Aspartate--tRNA ligase (592 aa).

L-aspartate is bound at residue Glu-171. The tract at residues 195–198 (QLFK) is aspartate. Arg-217 provides a ligand contact to L-aspartate. Residues 217–219 (RDE) and Gln-226 each bind ATP. His-448 contacts L-aspartate. Glu-482 contacts ATP. Arg-489 serves as a coordination point for L-aspartate. Residue 534–537 (GLDR) coordinates ATP.

This sequence belongs to the class-II aminoacyl-tRNA synthetase family. Type 1 subfamily. Homodimer.

The protein resides in the cytoplasm. It catalyses the reaction tRNA(Asp) + L-aspartate + ATP = L-aspartyl-tRNA(Asp) + AMP + diphosphate. In terms of biological role, catalyzes the attachment of L-aspartate to tRNA(Asp) in a two-step reaction: L-aspartate is first activated by ATP to form Asp-AMP and then transferred to the acceptor end of tRNA(Asp). The protein is Aspartate--tRNA ligase of Vibrio vulnificus (strain CMCP6).